The chain runs to 202 residues: dITP/XTP pyrophosphatase (202 aa).

Substrate is bound at residue 9 to 14; it reads TGNKGK. The Proton acceptor role is filled by Asp-73. Asp-73 is a binding site for Mg(2+). Residues Ser-74, 158–161, Lys-181, and 186–187 contribute to the substrate site; these read FGYD and HR.

This sequence belongs to the HAM1 NTPase family. In terms of assembly, homodimer. The cofactor is Mg(2+).

It catalyses the reaction XTP + H2O = XMP + diphosphate + H(+). The enzyme catalyses dITP + H2O = dIMP + diphosphate + H(+). It carries out the reaction ITP + H2O = IMP + diphosphate + H(+). Its function is as follows. Pyrophosphatase that catalyzes the hydrolysis of nucleoside triphosphates to their monophosphate derivatives, with a high preference for the non-canonical purine nucleotides XTP (xanthosine triphosphate), dITP (deoxyinosine triphosphate) and ITP. Seems to function as a house-cleaning enzyme that removes non-canonical purine nucleotides from the nucleotide pool, thus preventing their incorporation into DNA/RNA and avoiding chromosomal lesions. In Lactobacillus acidophilus (strain ATCC 700396 / NCK56 / N2 / NCFM), this protein is dITP/XTP pyrophosphatase.